Here is a 228-residue protein sequence, read N- to C-terminus: LexA repressor (228 aa).

Residues phenylalanine 26–threonine 46 constitute a DNA-binding region (H-T-H motif). Catalysis depends on for autocatalytic cleavage activity residues serine 149 and lysine 187.

This sequence belongs to the peptidase S24 family. Homodimer.

It catalyses the reaction Hydrolysis of Ala-|-Gly bond in repressor LexA.. In terms of biological role, represses a number of genes involved in the response to DNA damage (SOS response), including recA and lexA. In the presence of single-stranded DNA, RecA interacts with LexA causing an autocatalytic cleavage which disrupts the DNA-binding part of LexA, leading to derepression of the SOS regulon and eventually DNA repair. The protein is LexA repressor of Jannaschia sp. (strain CCS1).